The sequence spans 443 residues: Elongation factor 1-alpha (443 aa).

The tr-type G domain maps to Lys-5–Tyr-228. The segment at Gly-14–Ser-21 is G1. Gly-14–Ser-21 serves as a coordination point for GTP. The G2 stretch occupies residues Gly-70–Asp-74. Positions Asp-91–Gly-94 are G3. Residues Asp-91–His-95 and Asn-153–Asp-156 each bind GTP. A G4 region spans residues Asn-153–Asp-156. The G5 stretch occupies residues Ser-192–Phe-194.

This sequence belongs to the TRAFAC class translation factor GTPase superfamily. Classic translation factor GTPase family. EF-Tu/EF-1A subfamily.

It localises to the cytoplasm. This protein promotes the GTP-dependent binding of aminoacyl-tRNA to the A-site of ribosomes during protein biosynthesis. The chain is Elongation factor 1-alpha (MEF-1) from Plasmodium falciparum (isolate K1 / Thailand).